A 370-amino-acid chain; its full sequence is Pulmonary surfactant-associated protein B (370 aa).

The N-terminal stretch at 1–24 (MAKSHLPPWLLLLLLPTLCGPGTA) is a signal peptide. The propeptide occupies 25–184 (VWATSPLACA…PHTQDLSAQR (160 aa)). The Saposin A-type domain maps to 26 to 66 (WATSPLACAQGPEFWCQSLEQALQCKALGHCLQEVWGHVGA). Saposin B-type domains are found at residues 66 to 148 (ADDL…QPGS), 188 to 265 (PLPL…SSVD), and 284 to 359 (QDPE…VATL). Intrachain disulfides connect Cys-70-Cys-144, Cys-73-Cys-138, Cys-101-Cys-113, Cys-192-Cys-261, Cys-195-Cys-255, Cys-219-Cys-230, Cys-288-Cys-355, Cys-291-Cys-349, and Cys-314-Cys-324. A propeptide spanning residues 264–370 (VDSIGQVPPT…PLQCIQSPHF (107 aa)) is cleaved from the precursor. A glycan (N-linked (GlcNAc...) asparagine) is linked at Asn-300.

Homodimer; disulfide-linked.

It localises to the secreted. The protein resides in the extracellular space. The protein localises to the surface film. Its function is as follows. Pulmonary surfactant-associated proteins promote alveolar stability by lowering the surface tension at the air-liquid interface in the peripheral air spaces. SP-B increases the collapse pressure of palmitic acid to nearly 70 millinewtons per meter. The sequence is that of Pulmonary surfactant-associated protein B (SFTPB) from Oryctolagus cuniculus (Rabbit).